We begin with the raw amino-acid sequence, 327 residues long: Tagatose 1,6-diphosphate aldolase 2 (327 aa).

This sequence belongs to the aldolase LacD family.

The catalysed reaction is D-tagatofuranose 1,6-bisphosphate = D-glyceraldehyde 3-phosphate + dihydroxyacetone phosphate. The protein operates within carbohydrate metabolism; D-tagatose 6-phosphate degradation; D-glyceraldehyde 3-phosphate and glycerone phosphate from D-tagatose 6-phosphate: step 2/2. In Streptococcus pyogenes serotype M3 (strain ATCC BAA-595 / MGAS315), this protein is Tagatose 1,6-diphosphate aldolase 2 (lacD2).